A 267-amino-acid polypeptide reads, in one-letter code: FCS-Like Zinc finger 8 (267 aa).

Disordered regions lie at residues 1–29 (MLKK…KTTP) and 124–156 (DSPI…GSPR). Polar residues-rich tracts occupy residues 15 to 28 (ETNQ…SKTT) and 126 to 141 (PISS…NSQP). An FLZ-type zinc finger spans residues 221–265 (SFLSCCCNCKKSLGPRDDIFMYRGDRAFCSSECRSIEMMMSEEND).

It belongs to the FLZ family. As to quaternary structure, interacts with KIN10 and KIN11 via its FLZ-type zinc finger domain. Interacts with KINB1, KINB2, KINB3 and SNF4 via its N-terminal part. Interacts with HB21/ZHD3.

May act as an adapter to facilitate the interaction of SnRK1 complex with effector proteins, conferring tissue- and stimulus-type specific differences in the SnRK1 regulation pathway. The protein is FCS-Like Zinc finger 8 of Arabidopsis thaliana (Mouse-ear cress).